We begin with the raw amino-acid sequence, 140 residues long: uncharacterized protein (140 aa).

It belongs to the SufE family.

This is an uncharacterized protein from Rhizobium meliloti (strain 1021) (Ensifer meliloti).